We begin with the raw amino-acid sequence, 371 residues long: tRNA-specific 2-thiouridylase MnmA (371 aa).

ATP contacts are provided by residues 16 to 23 and methionine 42; that span reads GMSGGVDS. The segment at 102–104 is interaction with target base in tRNA; the sequence is NPD. Cysteine 107 functions as the Nucleophile in the catalytic mechanism. Cysteine 107 and cysteine 204 are oxidised to a cystine. Glycine 132 is a binding site for ATP. Residues 154 to 156 are interaction with tRNA; that stretch reads KDQ. Catalysis depends on cysteine 204, which acts as the Cysteine persulfide intermediate. Positions 316-317 are interaction with tRNA; sequence RY.

This sequence belongs to the MnmA/TRMU family.

The protein localises to the cytoplasm. The catalysed reaction is S-sulfanyl-L-cysteinyl-[protein] + uridine(34) in tRNA + AH2 + ATP = 2-thiouridine(34) in tRNA + L-cysteinyl-[protein] + A + AMP + diphosphate + H(+). Its function is as follows. Catalyzes the 2-thiolation of uridine at the wobble position (U34) of tRNA, leading to the formation of s(2)U34. This chain is tRNA-specific 2-thiouridylase MnmA, found in Shewanella pealeana (strain ATCC 700345 / ANG-SQ1).